We begin with the raw amino-acid sequence, 199 residues long: Superoxide dismutase [Fe] (199 aa).

Positions 28, 80, 162, and 166 each coordinate Fe cation.

Belongs to the iron/manganese superoxide dismutase family. As to quaternary structure, homodimer. Requires Fe cation as cofactor.

The protein localises to the cytoplasm. The catalysed reaction is 2 superoxide + 2 H(+) = H2O2 + O2. In terms of biological role, destroys superoxide anion radicals which are normally produced within the cells and which are toxic to biological systems. The chain is Superoxide dismutase [Fe] (sodB) from Leptolyngbya boryana (Plectonema boryanum).